A 101-amino-acid polypeptide reads, in one-letter code: Small integral membrane protein 14 (101 aa).

Residues 71 to 81 (SDRRTADDAAI) show a composition bias toward basic and acidic residues. Residues 71 to 101 (SDRRTADDAAIEKPTGSSDDNTPPPPPPSAM) are disordered. The segment covering 92 to 101 (TPPPPPPSAM) has biased composition (pro residues).

In Caenorhabditis elegans, this protein is Small integral membrane protein 14.